Consider the following 977-residue polypeptide: Pro-apoptotic serine protease NMA111 (977 aa).

The tract at residues methionine 1–serine 36 is disordered. The serine protease stretch occupies residues valine 64–leucine 254. Active-site charge relay system residues include histidine 102, aspartate 133, and serine 216. PDZ domains lie at glutamine 271–glutamine 356 and serine 749–glycine 835.

This sequence belongs to the peptidase S1C family.

It localises to the nucleus. Its function is as follows. Nuclear serine protease which mediates apoptosis. The protein is Pro-apoptotic serine protease NMA111 (NMA111) of Eremothecium gossypii (strain ATCC 10895 / CBS 109.51 / FGSC 9923 / NRRL Y-1056) (Yeast).